The chain runs to 255 residues: Folate receptor beta (255 aa).

The first 16 residues, 1 to 16, serve as a signal peptide directing secretion; the sequence is MVWKWMPLLLLLVCVA. Intrachain disulfides connect cysteine 31–cysteine 59, cysteine 51–cysteine 99, cysteine 60–cysteine 103, cysteine 83–cysteine 169, cysteine 90–cysteine 140, cysteine 129–cysteine 203, cysteine 133–cysteine 183, and cysteine 146–cysteine 163. Residues aspartate 97 and tyrosine 101 each coordinate folate. Asparagine 115 carries N-linked (GlcNAc...) asparagine glycosylation. Folate-binding positions include 118–122, 151–156, and serine 190; these read WRKER and HRGWDW. N-linked (GlcNAc...) asparagine glycosylation occurs at asparagine 195. Asparagine 230 carries GPI-anchor amidated asparagine lipidation. Residues 231 to 255 constitute a propeptide, removed in mature form; the sequence is AGEMLHGTGGLLLSLALMLQLWLLG.

It belongs to the folate receptor family. Post-translationally, N-glycosylated. In terms of tissue distribution, expressed in placenta and hematopoietic cells. Expression is increased in malignant tissues.

The protein resides in the cell membrane. Its subcellular location is the secreted. Functionally, binds to folate and reduced folic acid derivatives and mediates delivery of 5-methyltetrahydrofolate and folate analogs into the interior of cells. Has high affinity for folate and folic acid analogs at neutral pH. Exposure to slightly acidic pH after receptor endocytosis triggers a conformation change that strongly reduces its affinity for folates and mediates their release. This chain is Folate receptor beta (FOLR2), found in Homo sapiens (Human).